We begin with the raw amino-acid sequence, 286 residues long: Polyamine aminopropyltransferase (286 aa).

The region spanning 5–238 (TMWHETLHDQ…GIMTFAWATD (234 aa)) is the PABS domain. Residue Gln33 coordinates S-methyl-5'-thioadenosine. Spermidine is bound by residues His64 and Asp88. S-methyl-5'-thioadenosine-binding positions include Glu108 and 140 to 141 (DG). Asp158 serves as the catalytic Proton acceptor. 158-161 (DCTD) serves as a coordination point for spermidine. Pro165 serves as a coordination point for S-methyl-5'-thioadenosine.

This sequence belongs to the spermidine/spermine synthase family. Homodimer or homotetramer.

The protein resides in the cytoplasm. It carries out the reaction S-adenosyl 3-(methylsulfanyl)propylamine + putrescine = S-methyl-5'-thioadenosine + spermidine + H(+). Its pathway is amine and polyamine biosynthesis; spermidine biosynthesis; spermidine from putrescine: step 1/1. Its function is as follows. Catalyzes the irreversible transfer of a propylamine group from the amino donor S-adenosylmethioninamine (decarboxy-AdoMet) to putrescine (1,4-diaminobutane) to yield spermidine. This is Polyamine aminopropyltransferase from Salmonella paratyphi A (strain ATCC 9150 / SARB42).